The following is a 166-amino-acid chain: UPF0254 protein Mevan_0254 (166 aa).

Belongs to the UPF0254 family.

This Methanococcus vannielii (strain ATCC 35089 / DSM 1224 / JCM 13029 / OCM 148 / SB) protein is UPF0254 protein Mevan_0254.